Here is a 154-residue protein sequence, read N- to C-terminus: Protein X (154 aa).

The segment at 68 to 117 is mitochondrial targeting sequence; sequence PCALRFTSARRMETTVNAHQVLPKVLYKRTLGLSAMSTTDLEAYFKDCLF.

It belongs to the orthohepadnavirus protein X family. As to quaternary structure, may form homodimer. May interact with host CEBPA, CFLAR, CREB1, DDB1, E4F1, HBXIP, HSPD1/HSP60, NFKBIA, POLR2E and SMAD4. Interacts with host SMC5-SMC6 complex and induces its degradation. Interacts with host TRPC4AP; leading to prevent ubiquitination of TRPC4AP. Interacts with host PLSCR1; this interaction promotes ubiquitination and degradation of HBx and impairs HBx-mediated cell proliferation. A fraction may be phosphorylated in insect cells and HepG2 cells, a human hepatoblastoma cell line. Phosphorylated in vitro by host protein kinase C or mitogen-activated protein kinase. N-acetylated in insect cells.

The protein resides in the host cytoplasm. Its subcellular location is the host nucleus. The protein localises to the host mitochondrion. Multifunctional protein that plays a role in silencing host antiviral defenses and promoting viral transcription. Does not seem to be essential for HBV infection. May be directly involved in development of cirrhosis and liver cancer (hepatocellular carcinoma). Most of cytosolic activities involve modulation of cytosolic calcium. The effect on apoptosis is controversial depending on the cell types in which the studies have been conducted. May induce apoptosis by localizing in mitochondria and causing loss of mitochondrial membrane potential. May also modulate apoptosis by binding host CFLAR, a key regulator of the death-inducing signaling complex (DISC). Promotes viral transcription by using the host E3 ubiquitin ligase DDB1 to target the SMC5-SMC6 complex to proteasomal degradation. This host complex would otherwise bind to viral episomal DNA, and prevents its transcription. Moderately stimulates transcription of many different viral and cellular transcription elements. Promoters and enhancers stimulated by HBx contain DNA binding sites for NF-kappa-B, AP-1, AP-2, c-EBP, ATF/CREB, or the calcium-activated factor NF-AT. This is Protein X from Homo sapiens (Human).